Here is a 145-residue protein sequence, read N- to C-terminus: uncharacterized protein (145 aa).

The signal sequence occupies residues 1–29; that stretch reads MHLIRAAGAVCLAVVLIAGCRFNEDQHQA. Residues 67 to 101 adopt a coiled-coil conformation; sequence KNGTQEKAEIQDKLSGVNQEGEEALDEMKMILSEL.

This is an uncharacterized protein from Bacillus subtilis (strain 168).